The chain runs to 66 residues: DNA gyrase inhibitor YacG (66 aa).

4 residues coordinate Zn(2+): Cys-9, Cys-12, Cys-28, and Cys-32. The segment at 45-66 is disordered; it reads HKIAGAEESEDELYSGDLEPRH.

The protein belongs to the DNA gyrase inhibitor YacG family. As to quaternary structure, interacts with GyrB. Zn(2+) is required as a cofactor.

In terms of biological role, inhibits all the catalytic activities of DNA gyrase by preventing its interaction with DNA. Acts by binding directly to the C-terminal domain of GyrB, which probably disrupts DNA binding by the gyrase. In Pseudomonas entomophila (strain L48), this protein is DNA gyrase inhibitor YacG.